We begin with the raw amino-acid sequence, 496 residues long: 6-phosphogluconate dehydrogenase, decarboxylating (496 aa).

NADP(+) contacts are provided by residues 13 to 18 (GLDVSI), 24 to 26 (DNV), 68 to 70 (ITH), and Asn-96. Substrate contacts are provided by residues Asn-96 and 122 to 124 (SGG). Lys-178 functions as the Proton acceptor in the catalytic mechanism. Residue 181–182 (HN) participates in substrate binding. The active-site Proton donor is the Glu-185. Substrate is bound by residues Arg-300 and His-468. The interval 476–496 (PGEDPGPVSKGPHHYEWRPAK) is disordered.

This sequence belongs to the 6-phosphogluconate dehydrogenase family. As to quaternary structure, homodimer.

Its subcellular location is the cytoplasm. It catalyses the reaction 6-phospho-D-gluconate + NADP(+) = D-ribulose 5-phosphate + CO2 + NADPH. It functions in the pathway carbohydrate degradation; pentose phosphate pathway; D-ribulose 5-phosphate from D-glucose 6-phosphate (oxidative stage): step 3/3. Its function is as follows. Catalyzes the oxidative decarboxylation of 6-phosphogluconate to ribulose 5-phosphate and CO(2), with concomitant reduction of NADP to NADPH. The chain is 6-phosphogluconate dehydrogenase, decarboxylating from Emericella nidulans (strain FGSC A4 / ATCC 38163 / CBS 112.46 / NRRL 194 / M139) (Aspergillus nidulans).